Consider the following 332-residue polypeptide: MATLKDQLIHNLLKEEHVPHNKITVVGVGAVGMACAISILMKELADEIALVDVMEDKLKGEMMDLQHGSLFLRTPKIVSGKDYNVTANSRLVVITAGARQQEGESRLNLVQRNVNIFKFIIPNIVKYSPNCKLLVVSNPVDILTYVAWKISGFPKNRVIGSGCNLDSARFRYLMGERLGVHPLSCHGWILGEHGDSSVPVWSGVNVAGVSLKNLHPELGTDADKEHWKAVHKQVVDSAYEVIKLKGYTSWAIGLSVADLAESIMKNLRRVHPISTMIKGLYGIKEDVFLSVPCILGQNGISDVVKVTLTPEEEAHLKKSADTLWGIQKELQF.

Position 2 is an N-acetylalanine (A2). At K5 the chain carries N6-acetyllysine; alternate. K5 carries the post-translational modification N6-succinyllysine; alternate. Position 14 is an N6-acetyllysine (K14). An NAD(+)-binding site is contributed by 29-57; sequence GAVGMACAISILMKELADEIALVDVMEDK. At K57 the chain carries N6-acetyllysine; alternate. K57 is covalently cross-linked (Glycyl lysine isopeptide (Lys-Gly) (interchain with G-Cter in SUMO2); alternate). K81 bears the N6-acetyllysine mark. R99 serves as a coordination point for NAD(+). R106 serves as a coordination point for substrate. The residue at position 118 (K118) is an N6-acetyllysine; alternate. Position 118 is an N6-succinyllysine; alternate (K118). K126 bears the N6-acetyllysine mark. Residue N138 coordinates NAD(+). Substrate contacts are provided by N138 and R169. The Proton acceptor role is filled by H193. N6-acetyllysine is present on residues K224 and K232. Phosphotyrosine is present on Y239. Residue K243 is modified to N6-acetyllysine. T248 is a substrate binding site. A Phosphothreonine modification is found at T309. The residue at position 318 (K318) is an N6-acetyllysine; alternate. An N6-succinyllysine; alternate modification is found at K318. T322 carries the phosphothreonine modification.

The protein belongs to the LDH/MDH superfamily. LDH family. In terms of assembly, homotetramer. Interacts with PTEN upstream reading frame protein MP31. In terms of processing, ISGylated.

It is found in the cytoplasm. It carries out the reaction (S)-lactate + NAD(+) = pyruvate + NADH + H(+). The protein operates within fermentation; pyruvate fermentation to lactate; (S)-lactate from pyruvate: step 1/1. Interconverts simultaneously and stereospecifically pyruvate and lactate with concomitant interconversion of NADH and NAD(+). The chain is L-lactate dehydrogenase A chain (LDHA) from Sus scrofa (Pig).